Consider the following 595-residue polypeptide: Chaperone protein HscA homolog (595 aa).

The protein belongs to the heat shock protein 70 family.

In terms of biological role, chaperone involved in the maturation of iron-sulfur cluster-containing proteins. Has a low intrinsic ATPase activity which is markedly stimulated by HscB. The protein is Chaperone protein HscA homolog of Rickettsia akari (strain Hartford).